We begin with the raw amino-acid sequence, 108 residues long: Glutaredoxin-1 (108 aa).

One can recognise a Glutaredoxin domain in the interval 3-106; that stretch reads EEFVQQRLAN…DILLSIGVLR (104 aa). The cysteines at positions 23 and 26 are disulfide-linked.

This sequence belongs to the glutaredoxin family.

It localises to the virion. Its function is as follows. Displays thioltransferase and dehydroascorbate reductase activities. In Cynomys gunnisoni (Gunnison's prairie dog), this protein is Glutaredoxin-1 (OPG075).